A 217-amino-acid polypeptide reads, in one-letter code: Growth hormone variant (217 aa).

The N-terminal stretch at 1–26 is a signal peptide; that stretch reads MAAGSRTSLLLAFGLLCLPWLQEGSA. Cystine bridges form between C79–C191 and C208–C215. Residue S132 is modified to Phosphoserine. N-linked (GlcNAc...) asparagine glycosylation is present at N166. S176 is subject to Phosphoserine.

This sequence belongs to the somatotropin/prolactin family. As to expression, expressed in the placenta.

Its subcellular location is the secreted. In terms of biological role, plays an important role in growth control. Its major role in stimulating body growth is to stimulate the liver and other tissues to secrete IGF1. It stimulates both the differentiation and proliferation of myoblasts. It also stimulates amino acid uptake and protein synthesis in muscle and other tissues. This Pan troglodytes (Chimpanzee) protein is Growth hormone variant (GH2).